Consider the following 125-residue polypeptide: Small ribosomal subunit protein eS8 (125 aa).

A disordered region spans residues 1 to 36; sequence MKDQGRSTRKRTGGRLHDVSKKKRHQLGREPAETTV. The span at 7–26 shows a compositional bias: basic residues; that stretch reads STRKRTGGRLHDVSKKKRHQ. Over residues 27–36 the composition is skewed to basic and acidic residues; it reads LGREPAETTV.

This sequence belongs to the eukaryotic ribosomal protein eS8 family. Part of the 30S ribosomal subunit.

This chain is Small ribosomal subunit protein eS8, found in Haloquadratum walsbyi (strain DSM 16790 / HBSQ001).